Here is a 360-residue protein sequence, read N- to C-terminus: DNA replication and repair protein RecF (360 aa).

An ATP-binding site is contributed by 30-37 (GQNGSGKT).

Belongs to the RecF family.

It is found in the cytoplasm. The RecF protein is involved in DNA metabolism; it is required for DNA replication and normal SOS inducibility. RecF binds preferentially to single-stranded, linear DNA. It also seems to bind ATP. The polypeptide is DNA replication and repair protein RecF (Shewanella sp. (strain W3-18-1)).